The primary structure comprises 159 residues: Cyclic pyranopterin monophosphate synthase (159 aa).

Residues 75–77 (LCH) and 113–114 (ME) contribute to the substrate site. The active site involves Asp-128.

It belongs to the MoaC family. As to quaternary structure, homohexamer; trimer of dimers.

The enzyme catalyses (8S)-3',8-cyclo-7,8-dihydroguanosine 5'-triphosphate = cyclic pyranopterin phosphate + diphosphate. It functions in the pathway cofactor biosynthesis; molybdopterin biosynthesis. Catalyzes the conversion of (8S)-3',8-cyclo-7,8-dihydroguanosine 5'-triphosphate to cyclic pyranopterin monophosphate (cPMP). This Vibrio atlanticus (strain LGP32) (Vibrio splendidus (strain Mel32)) protein is Cyclic pyranopterin monophosphate synthase.